Consider the following 204-residue polypeptide: N-(5'-phosphoribosyl)anthranilate isomerase (204 aa).

Belongs to the TrpF family.

The catalysed reaction is N-(5-phospho-beta-D-ribosyl)anthranilate = 1-(2-carboxyphenylamino)-1-deoxy-D-ribulose 5-phosphate. Its pathway is amino-acid biosynthesis; L-tryptophan biosynthesis; L-tryptophan from chorismate: step 3/5. The protein is N-(5'-phosphoribosyl)anthranilate isomerase of Geobacter sp. (strain M21).